The following is a 185-amino-acid chain: Transcription antitermination protein NusB (185 aa).

Belongs to the NusB family.

Functionally, involved in transcription antitermination. Required for transcription of ribosomal RNA (rRNA) genes. Binds specifically to the boxA antiterminator sequence of the ribosomal RNA (rrn) operons. This is Transcription antitermination protein NusB from Rhodospirillum rubrum (strain ATCC 11170 / ATH 1.1.1 / DSM 467 / LMG 4362 / NCIMB 8255 / S1).